A 108-amino-acid polypeptide reads, in one-letter code: Large ribosomal subunit protein uL24 (108 aa).

This sequence belongs to the universal ribosomal protein uL24 family. As to quaternary structure, part of the 50S ribosomal subunit.

Functionally, one of two assembly initiator proteins, it binds directly to the 5'-end of the 23S rRNA, where it nucleates assembly of the 50S subunit. One of the proteins that surrounds the polypeptide exit tunnel on the outside of the subunit. This is Large ribosomal subunit protein uL24 from Mycoplasmopsis synoviae (strain 53) (Mycoplasma synoviae).